Reading from the N-terminus, the 545-residue chain is CTP synthase (545 aa).

An amidoligase domain region spans residues 1-266 (MTTRYIFVTG…DDLVVKRFGL (266 aa)). Residue Ser-14 coordinates CTP. Ser-14 is a UTP binding site. ATP is bound by residues 15–20 (SLGKGI) and Asp-72. Asp-72 and Glu-140 together coordinate Mg(2+). CTP contacts are provided by residues 147-149 (DIE), 187-192 (KTKPTQ), and Lys-223. UTP-binding positions include 187-192 (KTKPTQ) and Lys-223. Residue 239 to 241 (KDV) participates in ATP binding. The Glutamine amidotransferase type-1 domain occupies 291–542 (VIGMVGKYIE…IAAASAHQKR (252 aa)). Gly-352 is a binding site for L-glutamine. Cys-379 functions as the Nucleophile; for glutamine hydrolysis in the catalytic mechanism. L-glutamine contacts are provided by residues 380–383 (LGMQ), Glu-403, and Arg-470. Active-site residues include His-515 and Glu-517.

Belongs to the CTP synthase family. In terms of assembly, homotetramer.

The enzyme catalyses UTP + L-glutamine + ATP + H2O = CTP + L-glutamate + ADP + phosphate + 2 H(+). The catalysed reaction is L-glutamine + H2O = L-glutamate + NH4(+). It carries out the reaction UTP + NH4(+) + ATP = CTP + ADP + phosphate + 2 H(+). It functions in the pathway pyrimidine metabolism; CTP biosynthesis via de novo pathway; CTP from UDP: step 2/2. Allosterically activated by GTP, when glutamine is the substrate; GTP has no effect on the reaction when ammonia is the substrate. The allosteric effector GTP functions by stabilizing the protein conformation that binds the tetrahedral intermediate(s) formed during glutamine hydrolysis. Inhibited by the product CTP, via allosteric rather than competitive inhibition. Its function is as follows. Catalyzes the ATP-dependent amination of UTP to CTP with either L-glutamine or ammonia as the source of nitrogen. Regulates intracellular CTP levels through interactions with the four ribonucleotide triphosphates. This Shewanella putrefaciens (strain CN-32 / ATCC BAA-453) protein is CTP synthase.